The primary structure comprises 405 residues: Pulcherriminic acid synthase (405 aa).

Positions 62, 229, 285, and 353 each coordinate heme.

It belongs to the cytochrome P450 family. As to quaternary structure, homodimer. It depends on heme as a cofactor.

It catalyses the reaction cyclo(L-leucyl-L-leucyl) + 6 reduced [2Fe-2S]-[ferredoxin] + 3 O2 + 4 H(+) = pulcherriminic acid + 6 oxidized [2Fe-2S]-[ferredoxin] + 4 H2O. In terms of biological role, involved in the biosynthesis of pulcherrimin, a red extracellular pigment. Catalyzes the oxidation of cyclo(L-Leu-L-Leu) (cLL) to yield pulcherriminic acid which forms pulcherrimin via a nonenzymic reaction with Fe(3+). Substrates with small alkyl groups (cAA, cLG, cLP) exhibit weaker binding to CYP134A1, but substrates with larger hydrophobic side chains bind in a similar regime to cLL. The protein is Pulcherriminic acid synthase (cypX) of Bacillus subtilis (strain 168).